We begin with the raw amino-acid sequence, 242 residues long: Phosphoribosylaminoimidazole-succinocarboxamide synthase (242 aa).

This sequence belongs to the SAICAR synthetase family.

The catalysed reaction is 5-amino-1-(5-phospho-D-ribosyl)imidazole-4-carboxylate + L-aspartate + ATP = (2S)-2-[5-amino-1-(5-phospho-beta-D-ribosyl)imidazole-4-carboxamido]succinate + ADP + phosphate + 2 H(+). It participates in purine metabolism; IMP biosynthesis via de novo pathway; 5-amino-1-(5-phospho-D-ribosyl)imidazole-4-carboxamide from 5-amino-1-(5-phospho-D-ribosyl)imidazole-4-carboxylate: step 1/2. The protein is Phosphoribosylaminoimidazole-succinocarboxamide synthase of Pediococcus pentosaceus (strain ATCC 25745 / CCUG 21536 / LMG 10740 / 183-1w).